A 1192-amino-acid polypeptide reads, in one-letter code: DNA topoisomerase 2 (1192 aa).

ATP is bound by residues Asn64, Asn95, and 142–149; that span reads GTNGVGLK. The Mg(2+) site is built by Glu438, Asp539, and Asp541. In terms of domain architecture, Topo IIA-type catalytic spans 707–1174; the sequence is IPNFLDGMTR…PGASVWLEEI (468 aa). Tyr800 (O-(5'-phospho-DNA)-tyrosine intermediate) is an active-site residue.

This sequence belongs to the type II topoisomerase family. It depends on Mg(2+) as a cofactor. Mn(2+) serves as cofactor. The cofactor is Ca(2+).

The protein resides in the host cytoplasm. It carries out the reaction ATP-dependent breakage, passage and rejoining of double-stranded DNA.. In terms of biological role, type II topoisomerase. Processively relaxes supercoiled DNA. Displays DNA-supercoiling activity only when associated with the viral histone-like protein. The sequence is that of DNA topoisomerase 2 from Ornithodoros (relapsing fever ticks).